Here is a 775-residue protein sequence, read N- to C-terminus: Subtilisin-like protease SBT3.8 (775 aa).

An N-terminal signal peptide occupies residues 1 to 26; it reads MKSCRTLIFVAIILNGLSTFVAHAGA. Residues 27-109 constitute a propeptide, activation peptide; sequence ESKVHIVYLG…VTPDSFYQLD (83 aa). The Inhibitor I9 domain maps to 30–108; sequence VHIVYLGEKQ…HVTPDSFYQL (79 aa). The Peptidase S8 domain occupies 113–622; the sequence is TWDYLGLSVA…GGLVNPEKAA (510 aa). Residue asparagine 129 is glycosylated (N-linked (GlcNAc...) asparagine). Aspartate 143 serves as the catalytic Charge relay system. Asparagine 174 and asparagine 202 each carry an N-linked (GlcNAc...) asparagine glycan. The active-site Charge relay system is the histidine 218. The 93-residue stretch at 384–476 folds into the PA domain; sequence SLVYPENPGN…VDYELGTDIL (93 aa). N-linked (GlcNAc...) asparagine glycans are attached at residues asparagine 395, asparagine 410, and asparagine 538. The active-site Charge relay system is the serine 553. N-linked (GlcNAc...) asparagine glycans are attached at residues asparagine 645, asparagine 721, and asparagine 756.

The protein belongs to the peptidase S8 family.

The protein resides in the secreted. The sequence is that of Subtilisin-like protease SBT3.8 from Arabidopsis thaliana (Mouse-ear cress).